A 376-amino-acid chain; its full sequence is Putative phosphoserine aminotransferase (376 aa).

Residues 1–30 (MADQLTPSLDIPAALKPRDGRFGSGPSKVR) are disordered. R50 is an L-glutamate binding site. Pyridoxal 5'-phosphate contacts are provided by residues 84 to 85 (AT), F108, T154, D176, and Q199. Residue K200 is modified to N6-(pyridoxal phosphate)lysine. Residue 251–252 (NT) participates in pyridoxal 5'-phosphate binding.

The protein belongs to the class-V pyridoxal-phosphate-dependent aminotransferase family. SerC subfamily. In terms of assembly, homodimer. Requires pyridoxal 5'-phosphate as cofactor.

It localises to the cytoplasm. It carries out the reaction O-phospho-L-serine + 2-oxoglutarate = 3-phosphooxypyruvate + L-glutamate. It catalyses the reaction 4-(phosphooxy)-L-threonine + 2-oxoglutarate = (R)-3-hydroxy-2-oxo-4-phosphooxybutanoate + L-glutamate. The protein operates within amino-acid biosynthesis; L-serine biosynthesis; L-serine from 3-phospho-D-glycerate: step 2/3. It functions in the pathway cofactor biosynthesis; pyridoxine 5'-phosphate biosynthesis; pyridoxine 5'-phosphate from D-erythrose 4-phosphate: step 3/5. Catalyzes the reversible conversion of 3-phosphohydroxypyruvate to phosphoserine and of 3-hydroxy-2-oxo-4-phosphonooxybutanoate to phosphohydroxythreonine. The chain is Putative phosphoserine aminotransferase from Mycobacterium leprae (strain TN).